The chain runs to 341 residues: UDP-N-acetylenolpyruvoylglucosamine reductase (341 aa).

An FAD-binding PCMH-type domain is found at 15–185 (VEQSCLSLIE…TAVGLRLPKA (171 aa)). The active site involves arginine 161. The Proton donor role is filled by serine 231. Residue glutamate 327 is part of the active site.

Belongs to the MurB family. FAD serves as cofactor.

It localises to the cytoplasm. The enzyme catalyses UDP-N-acetyl-alpha-D-muramate + NADP(+) = UDP-N-acetyl-3-O-(1-carboxyvinyl)-alpha-D-glucosamine + NADPH + H(+). It participates in cell wall biogenesis; peptidoglycan biosynthesis. Its function is as follows. Cell wall formation. The chain is UDP-N-acetylenolpyruvoylglucosamine reductase from Shewanella sp. (strain ANA-3).